We begin with the raw amino-acid sequence, 274 residues long: Transmembrane O-methyltransferase (274 aa).

Residues 14–34 (VGTMSPAIALAFLPLVVTLLV) traverse the membrane as a helical segment. S-adenosyl-L-methionine contacts are provided by residues glutamate 120, 122–123 (GT), serine 128, glutamate 146, and serine 176.

Belongs to the class I-like SAM-binding methyltransferase superfamily. Cation-dependent O-methyltransferase family. In terms of assembly, interacts with LHFPL5, PCDH15, TMC1, TMC2 and TMIE. Interacts directly with TMC1. The interaction of TOMT with TMC1 and TMC2 is required for the transportation of TMC1/2 into the stereocilia of hair cells.

The protein localises to the membrane. It localises to the cytoplasm. Its subcellular location is the endoplasmic reticulum. It carries out the reaction a catechol + S-adenosyl-L-methionine = a guaiacol + S-adenosyl-L-homocysteine + H(+). Functionally, catalyzes the O-methylation, and thereby the inactivation, of catecholamine neurotransmitters and catechol hormones. Required for auditory function. Component of the cochlear hair cell's mechanotransduction (MET) machinery. Involved in the assembly of the asymmetric tip-link MET complex. Required for transportation of TMC1 and TMC2 proteins into the mechanically sensitive stereocilia of the hair cells. The function in MET is independent of the enzymatic activity. This chain is Transmembrane O-methyltransferase, found in Propithecus coquereli (Coquerel's sifaka).